The chain runs to 186 residues: MHMKLILNLLVLLAPAAVFAAGGGHGDGHIPTSTIMFQAINLTILFAAIIYFTKDAIVSFFAGRKAAYLEAAQKSAFAREQAEKEFVDIKNKLANLDQTREENLRKAQTHAEDLKKQILEEANDVTKRIKNDAELTARLEVQRAQKELRTQLLQDSVEAARIVLTKDLGSSDQQKLQKDFINNVGV.

The helical transmembrane segment at 5–25 (LILNLLVLLAPAAVFAAGGGH) threads the bilayer.

This sequence belongs to the ATPase B chain family. As to quaternary structure, F-type ATPases have 2 components, F(1) - the catalytic core - and F(0) - the membrane proton channel. F(1) has five subunits: alpha(3), beta(3), gamma(1), delta(1), epsilon(1). F(0) has three main subunits: a(1), b(2) and c(10-14). The alpha and beta chains form an alternating ring which encloses part of the gamma chain. F(1) is attached to F(0) by a central stalk formed by the gamma and epsilon chains, while a peripheral stalk is formed by the delta and b chains.

The protein resides in the cell inner membrane. Functionally, f(1)F(0) ATP synthase produces ATP from ADP in the presence of a proton or sodium gradient. F-type ATPases consist of two structural domains, F(1) containing the extramembraneous catalytic core and F(0) containing the membrane proton channel, linked together by a central stalk and a peripheral stalk. During catalysis, ATP synthesis in the catalytic domain of F(1) is coupled via a rotary mechanism of the central stalk subunits to proton translocation. In terms of biological role, component of the F(0) channel, it forms part of the peripheral stalk, linking F(1) to F(0). In Bdellovibrio bacteriovorus (strain ATCC 15356 / DSM 50701 / NCIMB 9529 / HD100), this protein is ATP synthase subunit b.